An 854-amino-acid polypeptide reads, in one-letter code: MDKQQSPPPRRRRRPMLSCWECRRRKIKCDRNDPCAHCIRHETQCVFTAHTGTVATDSDVSRTRPGPKSASRPGVSIASGSNSAVATRPSSDAGRGGSAIPTAPPPRGPSSLPSIAGPNHPFNILNPSQDVSAPSTQVLQPSSRGPSLSTNTSPSASSAVIHTLLERIKTLEDSYSSLSSRHGDSIESRVSSIGEPRDLRPAWEDTVARHANAARRPAGLAGNWQDIVRRKSTKLGRSHRMGDAPDFAAIIECYSVMMGLTSKDDFSHIPEIKDLLAEGGGLLVESKQIAQRLKLGQPSKPPHTLSVVPPSPKLGQYLVRPTRERADVMAKLYFESFESAYRILHAPTFWANYEKYWQAPEAASNAVYLQILLVVAIGSSIYDHGDCNAVLDNIEMSRPCIFAAENWLADPFEKDRLEIAGLQVYCLCNMARQIYNVGGDLIWTSMGPLLYRALQVGLHREPGRLPGVSMFQAEIRRRLWATILDMVVQASLDALMPPMMSLDEFDVEPPANINDEEMDEDTTIIVPHPRTTFTSTSAQLALLETLPLRFGIVQYLFGMQSEQSYPSVLSLSSRLASALSMCNSLGNLGPQSQDQSHDNNMGTTNTTMAFRSITPFQRNLLDYLVRRFMTPLHMFFATQSHSNPVFHYSLTVSLDAALALVSPATPTTTTISTPAHNNEETNHFDRLLSTAGGLFREGFRTALTTISLALLVHAKTQQVSGTLHRAPQHRESLKAAVRDLVALAERRVRNGDTNIRAYMFLNMVLAQVEAMEAGARAGDGAFEMALVSGAVKSLRFCRDVIKTRAETRAPVDWEEMDFDADGMASFLPGDMDADAFGLDWDWESLLTTMDMAEG.

Residues cysteine 19–cysteine 45 constitute a DNA-binding region (zn(2)-C6 fungal-type). The tract at residues threonine 56–alanine 156 is disordered. Composition is skewed to polar residues over residues alanine 78–serine 90 and leucine 125–glycine 145. The span at proline 146–alanine 156 shows a compositional bias: low complexity.

Its subcellular location is the nucleus. Its function is as follows. Transcription factor; part of the gene cluster that mediates the biosynthesis of xenovulene A, an unusual meroterpenoid that has potent inhibitory effects on the human gamma-aminobutyrate A (GABAA) benzodiazepine receptor. The polypeptide is Transcription factor asR3 (Sarocladium schorii (Acremonium strictum (strain IMI 501407))).